Reading from the N-terminus, the 650-residue chain is Acetyl-coenzyme A synthetase (650 aa).

Residues 191-194 (RAGR), threonine 311, and asparagine 335 each bind CoA. ATP is bound by residues 387–389 (GEP), 411–416 (DTWWQT), aspartate 500, and arginine 515. Position 523 (serine 523) interacts with CoA. An ATP-binding site is contributed by arginine 526. 3 residues coordinate Mg(2+): valine 537, histidine 539, and valine 542. Arginine 584 is a binding site for CoA. Residue lysine 609 is modified to N6-acetyllysine.

It belongs to the ATP-dependent AMP-binding enzyme family. It depends on Mg(2+) as a cofactor. In terms of processing, acetylated. Deacetylation by the SIR2-homolog deacetylase activates the enzyme.

The enzyme catalyses acetate + ATP + CoA = acetyl-CoA + AMP + diphosphate. In terms of biological role, catalyzes the conversion of acetate into acetyl-CoA (AcCoA), an essential intermediate at the junction of anabolic and catabolic pathways. AcsA undergoes a two-step reaction. In the first half reaction, AcsA combines acetate with ATP to form acetyl-adenylate (AcAMP) intermediate. In the second half reaction, it can then transfer the acetyl group from AcAMP to the sulfhydryl group of CoA, forming the product AcCoA. The polypeptide is Acetyl-coenzyme A synthetase (Shewanella pealeana (strain ATCC 700345 / ANG-SQ1)).